A 360-amino-acid polypeptide reads, in one-letter code: Isopentenyl-diphosphate delta-isomerase (360 aa).

12–13 (RK) contributes to the substrate binding site. FMN is bound by residues serine 70, 71-73 (SMT), serine 101, and asparagine 130. 101 to 103 (SMR) contributes to the substrate binding site. A substrate-binding site is contributed by glutamine 165. Glutamate 166 is a binding site for Mg(2+). Residues lysine 197, 288 to 290 (GIR), and 309 to 310 (AG) each bind FMN.

This sequence belongs to the IPP isomerase type 2 family. In terms of assembly, homooctamer. Dimer of tetramers. FMN is required as a cofactor. The cofactor is NADPH. Mg(2+) serves as cofactor.

The protein localises to the cytoplasm. It carries out the reaction isopentenyl diphosphate = dimethylallyl diphosphate. Its function is as follows. Involved in the biosynthesis of isoprenoids. Catalyzes the 1,3-allylic rearrangement of the homoallylic substrate isopentenyl (IPP) to its allylic isomer, dimethylallyl diphosphate (DMAPP). In Chlorobium limicola (strain DSM 245 / NBRC 103803 / 6330), this protein is Isopentenyl-diphosphate delta-isomerase.